Consider the following 248-residue polypeptide: Sugar fermentation stimulation protein homolog (248 aa).

It belongs to the SfsA family.

This is Sugar fermentation stimulation protein homolog from Prochlorococcus marinus subsp. pastoris (strain CCMP1986 / NIES-2087 / MED4).